The sequence spans 684 residues: Cleavage and polyadenylation specificity factor subunit 3 (684 aa).

Ser2 bears the N-acetylserine mark. Zn(2+) contacts are provided by His71, His73, Asp75, His76, His158, and Asp179. The Proton donor role is filled by His396. Zn(2+) is bound at residue His418. Glycyl lysine isopeptide (Lys-Gly) (interchain with G-Cter in SUMO) cross-links involve residues Lys462, Lys465, and Lys545. Residue Ser659 is modified to Phosphoserine. Thr681 carries the post-translational modification Phosphothreonine.

Belongs to the metallo-beta-lactamase superfamily. RNA-metabolizing metallo-beta-lactamase-like family. CPSF3 subfamily. As to quaternary structure, component of the cleavage and polyadenylation specificity factor (CPSF) complex, composed of CPSF1, CPSF2, CPSF3, CPSF4 and FIP1L1. Interacts with CPSF2, CSTF2 and SYMPK. Interacts with TUT1; the interaction is direct and mediates the recruitment of the CPSF complex on the 3'UTR of pre-mRNAs. Interacts with WDR33. Interacts with ZC3H3. Zn(2+) is required as a cofactor. Post-translationally, sumoylated on Lys-462, Lys-465 and Lys-545, preferentially by SUMO3.

It localises to the nucleus. In terms of biological role, component of the cleavage and polyadenylation specificity factor (CPSF) complex that plays a key role in pre-mRNA 3'-end formation, recognizing the AAUAAA signal sequence and interacting with poly(A) polymerase and other factors to bring about cleavage and poly(A) addition. Has endonuclease activity, and functions as an mRNA 3'-end-processing endonuclease. Also involved in the histone 3'-end pre-mRNA processing. U7 snRNP-dependent protein that induces both the 3'-endoribonucleolytic cleavage of histone pre-mRNAs and acts as a 5' to 3' exonuclease for degrading the subsequent downstream cleavage product (DCP) of mature histone mRNAs. Cleavage occurs after the 5'-ACCCA-3' sequence in the histone pre-mRNA leaving a 3'hydroxyl group on the upstream fragment containing the stem loop (SL) and 5' phosphate on the downstream cleavage product (DCP) starting with CU nucleotides. The U7-dependent 5' to 3' exonuclease activity is processive and degrades the DCP RNA substrate even after complete removal of the U7-binding site. Binds to the downstream cleavage product (DCP) of histone pre-mRNAs and the cleaved DCP RNA substrate in a U7 snRNP dependent manner. Required for entering/progressing through S-phase of the cell cycle. Required for the selective processing of microRNAs (miRNAs) during embryonic stem cell differentiation via its interaction with ISY1. Required for the biogenesis of all miRNAs from the pri-miR-17-92 primary transcript except miR-92a. Only required for the biogenesis of miR-290 and miR-96 from the pri-miR-290-295 and pri-miR-96-183 primary transcripts, respectively. The protein is Cleavage and polyadenylation specificity factor subunit 3 (CPSF3) of Homo sapiens (Human).